We begin with the raw amino-acid sequence, 518 residues long: GMP synthase [glutamine-hydrolyzing] (518 aa).

Residues 13 to 203 (KIIVLDFGSQ…ALNVCGCKGD (191 aa)) enclose the Glutamine amidotransferase type-1 domain. The active-site Nucleophile is the Cys-90. Active-site residues include His-177 and Glu-179. The GMPS ATP-PPase domain occupies 204 to 393 (WTMENFSEVE…LGMPDAIVWR (190 aa)). 231 to 237 (SGGVDSS) provides a ligand contact to ATP.

In terms of assembly, homodimer.

It catalyses the reaction XMP + L-glutamine + ATP + H2O = GMP + L-glutamate + AMP + diphosphate + 2 H(+). The protein operates within purine metabolism; GMP biosynthesis; GMP from XMP (L-Gln route): step 1/1. In terms of biological role, catalyzes the synthesis of GMP from XMP. In Listeria welshimeri serovar 6b (strain ATCC 35897 / DSM 20650 / CCUG 15529 / CIP 8149 / NCTC 11857 / SLCC 5334 / V8), this protein is GMP synthase [glutamine-hydrolyzing].